The primary structure comprises 336 residues: MLPALTDLAQFRDLLGAAPGPDAAARAGAEERNGQLTKPPGALGRLEDLAIWYAGWRGDARPRIEAPQVIVFAGNHGVTAQGVSAFPAEVTVQMVMNFEHGGAAINQLARAAGARMDVHALELDRPTQDFTQAPAMTGDELLAALQCGWAAVDPAADLLVVGEMGIGNTTPAAAIAHALFGGAAGDWTGRGTGVDDAGLANKTRVVAEGVALHTSRDGLEVLRCLGGREIAAMAGAIAAARQLRIPVILDGFICTAAAAALAAVAANALDHTVAGHQSAEGAHAVLLAKLGKAPLLSLGLRLGEGSGGALAINILKSAVACHSGMATFAEAGVSDG.

A disordered region spans residues 20–41 (GPDAAARAGAEERNGQLTKPPG). Glu-304 serves as the catalytic Proton acceptor.

It belongs to the CobT family.

The enzyme catalyses 5,6-dimethylbenzimidazole + nicotinate beta-D-ribonucleotide = alpha-ribazole 5'-phosphate + nicotinate + H(+). It participates in nucleoside biosynthesis; alpha-ribazole biosynthesis; alpha-ribazole from 5,6-dimethylbenzimidazole: step 1/2. Its function is as follows. Catalyzes the synthesis of alpha-ribazole-5'-phosphate from nicotinate mononucleotide (NAMN) and 5,6-dimethylbenzimidazole (DMB). This is Nicotinate-nucleotide--dimethylbenzimidazole phosphoribosyltransferase from Ruegeria pomeroyi (strain ATCC 700808 / DSM 15171 / DSS-3) (Silicibacter pomeroyi).